The sequence spans 357 residues: DNA replication and repair protein RecF (357 aa).

30–37 (GANGSGKT) serves as a coordination point for ATP.

The protein belongs to the RecF family.

It is found in the cytoplasm. Its function is as follows. The RecF protein is involved in DNA metabolism; it is required for DNA replication and normal SOS inducibility. RecF binds preferentially to single-stranded, linear DNA. It also seems to bind ATP. This Citrobacter koseri (strain ATCC BAA-895 / CDC 4225-83 / SGSC4696) protein is DNA replication and repair protein RecF.